Consider the following 284-residue polypeptide: uncharacterized protein (284 aa).

This sequence belongs to the IIV-6 436R family.

This is an uncharacterized protein from Invertebrate iridescent virus 3 (IIV-3).